Reading from the N-terminus, the 135-residue chain is Race-specific elicitor A4 (135 aa).

The first 18 residues, 1-18 (MHYTTLLLSTLLVGTALA), serve as a signal peptide directing secretion. A propeptide spanning residues 19-29 (QPTNPPAKTPK) is cleaved from the precursor. Residues 19–39 (QPTNPPAKTPKKAPKTQPYNP) form a disordered region. Residues 47–111 (DTKCMGPKDC…DYPNLSTCPV (65 aa)) form the Chitin-binding type-2 domain. A disulfide bond links Cys-86 and Cys-101. Residues 112-135 (KTPQPKPKKGGVGGKKASVGHPGY) are disordered.

Its function is as follows. This necrosis-inducing peptide induces a hypersensitive response on Cf-4 tomato genotypes. Race-specific elicitors are compounds which only induce defense responses in genotypes of host plants which are resistant to the pathogenic race that produces the elicitor, but not in susceptible genotypes. This Passalora fulva (Tomato leaf mold) protein is Race-specific elicitor A4 (AVR4).